The primary structure comprises 417 residues: S-adenosylmethionine synthase (417 aa).

Position 16 (His16) interacts with ATP. Asp18 contributes to the Mg(2+) binding site. Glu44 serves as a coordination point for K(+). L-methionine contacts are provided by Glu57 and Gln100. The tract at residues 100-110 (QSPDIAQGVDT) is flexible loop. Residues 175-177 (DGK), 251-252 (KF), Asp260, 266-267 (RK), Ala283, and Lys287 contribute to the ATP site. Asp260 contributes to the L-methionine binding site. Residue Lys291 participates in L-methionine binding.

This sequence belongs to the AdoMet synthase family. As to quaternary structure, homotetramer; dimer of dimers. Mg(2+) is required as a cofactor. Requires K(+) as cofactor.

It is found in the cytoplasm. The catalysed reaction is L-methionine + ATP + H2O = S-adenosyl-L-methionine + phosphate + diphosphate. Its pathway is amino-acid biosynthesis; S-adenosyl-L-methionine biosynthesis; S-adenosyl-L-methionine from L-methionine: step 1/1. Functionally, catalyzes the formation of S-adenosylmethionine (AdoMet) from methionine and ATP. The overall synthetic reaction is composed of two sequential steps, AdoMet formation and the subsequent tripolyphosphate hydrolysis which occurs prior to release of AdoMet from the enzyme. In Synechococcus elongatus (strain ATCC 33912 / PCC 7942 / FACHB-805) (Anacystis nidulans R2), this protein is S-adenosylmethionine synthase.